Reading from the N-terminus, the 446-residue chain is Saccharopine dehydrogenase [NADP(+), L-glutamate-forming] (446 aa).

NADP(+) is bound by residues 10-13, 33-35, 54-55, Ile75, 97-98, 124-126, and Ser174; these read SGFV, CRT, DV, SS, and LDP. L-saccharopine contacts are provided by residues 98 to 99 and Asp125; that span reads SY. L-saccharopine is bound by residues Arg223 and 244–246; that span reads TLR.

Belongs to the saccharopine dehydrogenase family. Interacts with TRM112.

The enzyme catalyses L-saccharopine + NADP(+) + H2O = (S)-2-amino-6-oxohexanoate + L-glutamate + NADPH + H(+). It functions in the pathway amino-acid biosynthesis; L-lysine biosynthesis via AAA pathway; L-lysine from L-alpha-aminoadipate (fungal route): step 2/3. In Saccharomyces cerevisiae (strain ATCC 204508 / S288c) (Baker's yeast), this protein is Saccharopine dehydrogenase [NADP(+), L-glutamate-forming] (LYS9).